A 213-amino-acid chain; its full sequence is ATP phosphoribosyltransferase (213 aa).

It belongs to the ATP phosphoribosyltransferase family. Short subfamily. Heteromultimer composed of HisG and HisZ subunits.

The protein localises to the cytoplasm. The catalysed reaction is 1-(5-phospho-beta-D-ribosyl)-ATP + diphosphate = 5-phospho-alpha-D-ribose 1-diphosphate + ATP. It participates in amino-acid biosynthesis; L-histidine biosynthesis; L-histidine from 5-phospho-alpha-D-ribose 1-diphosphate: step 1/9. In terms of biological role, catalyzes the condensation of ATP and 5-phosphoribose 1-diphosphate to form N'-(5'-phosphoribosyl)-ATP (PR-ATP). Has a crucial role in the pathway because the rate of histidine biosynthesis seems to be controlled primarily by regulation of HisG enzymatic activity. The sequence is that of ATP phosphoribosyltransferase from Crocosphaera subtropica (strain ATCC 51142 / BH68) (Cyanothece sp. (strain ATCC 51142)).